The chain runs to 502 residues: ATP synthase subunit alpha (502 aa).

Residues 115–135 (VDGLGPINTTNTRPIESPAPG) form a disordered region. Residue 169-176 (GDRQTGKT) coordinates ATP.

Belongs to the ATPase alpha/beta chains family. As to quaternary structure, F-type ATPases have 2 components, CF(1) - the catalytic core - and CF(0) - the membrane proton channel. CF(1) has five subunits: alpha(3), beta(3), gamma(1), delta(1), epsilon(1). CF(0) has three main subunits: a(1), b(2) and c(9-12). The alpha and beta chains form an alternating ring which encloses part of the gamma chain. CF(1) is attached to CF(0) by a central stalk formed by the gamma and epsilon chains, while a peripheral stalk is formed by the delta and b chains.

Its subcellular location is the cell membrane. The catalysed reaction is ATP + H2O + 4 H(+)(in) = ADP + phosphate + 5 H(+)(out). In terms of biological role, produces ATP from ADP in the presence of a proton gradient across the membrane. The alpha chain is a regulatory subunit. The polypeptide is ATP synthase subunit alpha (Bacillus cereus (strain G9842)).